Consider the following 159-residue polypeptide: Transcription elongation factor GreA (159 aa).

A coiled-coil region spans residues 5 to 77; that stretch reads REVVLTAQGL…LETMLRKAVI (73 aa).

It belongs to the GreA/GreB family.

Necessary for efficient RNA polymerase transcription elongation past template-encoded arresting sites. The arresting sites in DNA have the property of trapping a certain fraction of elongating RNA polymerases that pass through, resulting in locked ternary complexes. Cleavage of the nascent transcript by cleavage factors such as GreA or GreB allows the resumption of elongation from the new 3'terminus. GreA releases sequences of 2 to 3 nucleotides. In Alkaliphilus oremlandii (strain OhILAs) (Clostridium oremlandii (strain OhILAs)), this protein is Transcription elongation factor GreA.